Here is a 386-residue protein sequence, read N- to C-terminus: ADP,ATP carrier protein, mitochondrial (386 aa).

The transit peptide at 1 to 76 (ADNQHPTVYQ…ANASPVFVQA (76 aa)) directs the protein to the mitochondrion. Solcar repeat units lie at residues 83–176 (AAFA…FKRL), 188–281 (KWFA…LKPV), and 289–375 (DSFF…LQVI). 5 helical membrane-spanning segments follow: residues 85–112 (FATDFLMGGVSAAVSKTAAAPIERVKLL), 153–177 (TANVIRYFPTQALNFAFKDYFKRLF), 186–206 (YWKWFAGNLASGGGAGASSLL), 257–278 (FNISCVGIIVYRGLYFGMYDSL), and 292–312 (FASFALGWLITNGAGLASYPI). 2 residues coordinate ADP: arginine 158 and lysine 170. Arginine 316 contacts ADP. The tract at residues 316–321 (RRRMMM) is important for transport activity. Positions 316–321 (RRRMMM) match the Nucleotide carrier signature motif motif. A helical membrane pass occupies residues 352-372 (AGANVLRAVAGAGVLAGYDKL).

Belongs to the mitochondrial carrier (TC 2.A.29) family. In terms of assembly, monomer.

It localises to the mitochondrion inner membrane. The catalysed reaction is ADP(in) + ATP(out) = ADP(out) + ATP(in). With respect to regulation, the matrix-open state (m-state) is inhibited by the membrane-permeable bongkrekic acid (BKA). The cytoplasmic-open state (c-state) is inhibited by the membrane-impermeable toxic inhibitor carboxyatractyloside (CATR). In terms of biological role, ADP:ATP antiporter that mediates import of ADP into the mitochondrial matrix for ATP synthesis, and export of ATP out to fuel the cell. Cycles between the cytoplasmic-open state (c-state) and the matrix-open state (m-state): operates by the alternating access mechanism with a single substrate-binding site intermittently exposed to either the cytosolic (c-state) or matrix (m-state) side of the inner mitochondrial membrane. The chain is ADP,ATP carrier protein, mitochondrial (ANT1) from Solanum tuberosum (Potato).